A 150-amino-acid chain; its full sequence is SsrA-binding protein (150 aa).

This sequence belongs to the SmpB family.

It localises to the cytoplasm. Its function is as follows. Required for rescue of stalled ribosomes mediated by trans-translation. Binds to transfer-messenger RNA (tmRNA), required for stable association of tmRNA with ribosomes. tmRNA and SmpB together mimic tRNA shape, replacing the anticodon stem-loop with SmpB. tmRNA is encoded by the ssrA gene; the 2 termini fold to resemble tRNA(Ala) and it encodes a 'tag peptide', a short internal open reading frame. During trans-translation Ala-aminoacylated tmRNA acts like a tRNA, entering the A-site of stalled ribosomes, displacing the stalled mRNA. The ribosome then switches to translate the ORF on the tmRNA; the nascent peptide is terminated with the 'tag peptide' encoded by the tmRNA and targeted for degradation. The ribosome is freed to recommence translation, which seems to be the essential function of trans-translation. The sequence is that of SsrA-binding protein from Borreliella afzelii (strain PKo) (Borrelia afzelii).